The primary structure comprises 308 residues: Mycothiol acetyltransferase (308 aa).

N-acetyltransferase domains lie at 12-149 and 165-308; these read DVLD…RPLG and VTVR…RTET. Glu-43 is a 1D-myo-inositol 2-(L-cysteinylamino)-2-deoxy-alpha-D-glucopyranoside binding site. An acetyl-CoA-binding site is contributed by 88 to 90; sequence LVV. 1D-myo-inositol 2-(L-cysteinylamino)-2-deoxy-alpha-D-glucopyranoside contacts are provided by Glu-192, Lys-231, and Glu-240. Acetyl-CoA contacts are provided by residues 244–246 and 251–257; these read VGV and QGGGLGR. Tyr-278 contacts 1D-myo-inositol 2-(L-cysteinylamino)-2-deoxy-alpha-D-glucopyranoside.

The protein belongs to the acetyltransferase family. MshD subfamily. As to quaternary structure, monomer.

It carries out the reaction 1D-myo-inositol 2-(L-cysteinylamino)-2-deoxy-alpha-D-glucopyranoside + acetyl-CoA = mycothiol + CoA + H(+). In terms of biological role, catalyzes the transfer of acetyl from acetyl-CoA to desacetylmycothiol (Cys-GlcN-Ins) to form mycothiol. This is Mycothiol acetyltransferase from Streptomyces bingchenggensis (strain BCW-1).